The chain runs to 283 residues: MSESNSVSVQQMLDRSCWVCFATDEDDRTAEWVRPCRCRGSTKWVHQACLQRWVDEKQRGNSTARVACPQCNAEYLIVFPNLGPVVYVLDLADRLISKACPFAAAGIMVGSIYWTAVTYGAVTVMQVVGHKEGLDVMERADPLFLLIGLPTIPVVLILGKMIRWEDYVLRLWRKYSNKLQILNSIFPGIGCPVPRVPAEANPLADHVSATRILCGALVFPTIATIVGKLMFSTVNSNLQRTILGGIAFVAIKGAFKVYFKQQQYLRQAHRKILDSQEPEPEEV.

The segment at 9 to 78 adopts an RING-CH-type zinc-finger fold; that stretch reads VQQMLDRSCW…PQCNAEYLIV (70 aa). Residues C17, C20, C36, C38, H46, C49, C68, and C71 each contribute to the Zn(2+) site. The next 4 membrane-spanning stretches (helical) occupy residues 102–122, 142–162, 212–232, and 241–261; these read FAAA…YGAV, PLFL…GKMI, ILCG…LMFS, and TILG…YFKQ.

The protein localises to the mitochondrion outer membrane. Its subcellular location is the endoplasmic reticulum membrane. The catalysed reaction is S-ubiquitinyl-[E2 ubiquitin-conjugating enzyme]-L-cysteine + [acceptor protein]-L-lysine = [E2 ubiquitin-conjugating enzyme]-L-cysteine + N(6)-ubiquitinyl-[acceptor protein]-L-lysine.. The protein operates within protein modification; protein ubiquitination. In terms of biological role, mitochondrial E3 ubiquitin-protein ligase that plays a crucial role in the control of mitochondrial morphology by acting as a positive regulator of mitochondrial fission. May play a role in the prevention of cell senescence acting as a regulator of mitochondrial quality control. This Xenopus laevis (African clawed frog) protein is E3 ubiquitin-protein ligase MARCHF5 (marchf5).